A 164-amino-acid chain; its full sequence is Protein SprT (164 aa).

In terms of domain architecture, SprT-like spans 14–156 (QQAETFFKRT…LCRRCREPLV (143 aa)). H69 contributes to the Zn(2+) binding site. E70 is a catalytic residue. H73 contributes to the Zn(2+) binding site.

The protein belongs to the SprT family. Zn(2+) is required as a cofactor.

Its subcellular location is the cytoplasm. This Pseudomonas savastanoi pv. phaseolicola (strain 1448A / Race 6) (Pseudomonas syringae pv. phaseolicola (strain 1448A / Race 6)) protein is Protein SprT.